The chain runs to 156 residues: Arginine repressor (156 aa).

It belongs to the ArgR family.

It is found in the cytoplasm. It participates in amino-acid biosynthesis; L-arginine biosynthesis [regulation]. Regulates arginine biosynthesis genes. This chain is Arginine repressor, found in Proteus mirabilis (strain HI4320).